The primary structure comprises 396 residues: S-adenosylmethionine synthase 4 (396 aa).

E12 contacts Mg(2+). H18 serves as a coordination point for ATP. E46 is a K(+) binding site. 2 residues coordinate L-methionine: E59 and Q102. Residues 170–172 (DGK), 238–241 (SGRF), D249, 255–256 (RK), A272, K276, and K280 each bind ATP. D249 contacts L-methionine. K280 lines the L-methionine pocket.

It belongs to the AdoMet synthase family. As to quaternary structure, homotetramer. It depends on Mn(2+) as a cofactor. Requires Mg(2+) as cofactor. Co(2+) serves as cofactor. The cofactor is K(+).

It is found in the cytoplasm. The catalysed reaction is L-methionine + ATP + H2O = S-adenosyl-L-methionine + phosphate + diphosphate. The protein operates within amino-acid biosynthesis; S-adenosyl-L-methionine biosynthesis; S-adenosyl-L-methionine from L-methionine: step 1/1. In terms of biological role, catalyzes the formation of S-adenosylmethionine from methionine and ATP. The reaction comprises two steps that are both catalyzed by the same enzyme: formation of S-adenosylmethionine (AdoMet) and triphosphate, and subsequent hydrolysis of the triphosphate. This Hordeum vulgare (Barley) protein is S-adenosylmethionine synthase 4 (SAM4).